Reading from the N-terminus, the 200-residue chain is MAKKTYDLLFKLLLIGDSGVGKTCVLFRFSDDAFNTTFISTIGIDFKIKTVELQGKKIKLQIWDTAGQERFHTITTSYYRGAMGIMLVYDITNGKSFENISKWLRNIDEHANEDVERMLLGNKCDMDDKRVVPKGKGEQIAREHGIRFFETSAKANINIEKAFLTLAEDILRKTPVKEPNSENVDISSGGGVTGWKSKCC.

GTP is bound by residues serine 18, glycine 19, valine 20, glycine 21, lysine 22, threonine 23, cysteine 24, asparagine 35, threonine 36, serine 40, and threonine 41. Threonine 23 is a Mg(2+) binding site. 2 short sequence motifs (switch) span residues aspartate 32–phenylalanine 46 and aspartate 64–glycine 81. Residues threonine 41 and aspartate 64 each contribute to the Mg(2+) site. Residue glycine 67 participates in GTP binding. Threonine 73 bears the Phosphothreonine; by LRRK2 mark. The residue at position 102 (lysine 102) is an N6-acetyllysine. Lysine 102 is covalently cross-linked (Glycyl lysine isopeptide (Lys-Gly) (interchain with G-Cter in ubiquitin)). Residues asparagine 122, lysine 123, aspartate 125, and methionine 126 each contribute to the GTP site. Residue lysine 136 forms a Glycyl lysine isopeptide (Lys-Gly) (interchain with G-Cter in ubiquitin) linkage. 3 residues coordinate GTP: serine 152, alanine 153, and lysine 154. Lysine 154 is covalently cross-linked (Glycyl lysine isopeptide (Lys-Gly) (interchain with G-Cter in ubiquitin)). S-geranylgeranyl cysteine attachment occurs at residues cysteine 199 and cysteine 200.

The protein belongs to the small GTPase superfamily. Rab family. As to quaternary structure, interacts with MYO5A; mediates the transport to the plasma membrane of SLC2A4/GLUT4 storage vesicles. Interacts with GDI1 and with GDI2; negatively regulates RAB10 association with membranes and activation. Interacts (GDP-bound form) with LLGL1; the interaction is direct and promotes RAB10 association with membranes and activation through competition with the Rab inhibitor GDI1. Interacts with EXOC4; probably associates with the exocyst. Interacts (GTP-bound form) with MICALCL, MICAL1, MICAL3, EHBP1 and EHBP1L1; at least in case of MICAL1 two molecules of RAB10 can bind to one molecule of MICAL1. Interacts with TBC1D13. Interacts with SEC16A. Interacts with CHM and CHML. Interacts with LRRK2; interaction facilitates phosphorylation of Thr-73. Interacts (when phosphorylated on Thr-73) with RILPL1 and RILPL2. Interacts with TBC1D21. Interacts with MARCKS. The cofactor is Mg(2+). In terms of processing, ubiquitinated upon Legionella pneumophila infection. Ubiquitination does not lead to proteasomal degradation. Post-translationally, phosphorylation of Thr-73 in the switch II region by LRRK2 prevents the association of dRAB regulatory proteins, including CHM, CHML and RAB GDP dissociation inhibitors GDI1 and GDI2. Phosphorylation of Thr-73 by LRRK2 is stimulated by RAB29 and RAB32. Phosphorylation by LRRK2 is required for localization to stressed lysosomes. Expressed in the hippocampus. Expressed in neutrophils (at protein level). Expressed in the testis (at protein level).

The protein localises to the cytoplasmic vesicle membrane. It is found in the golgi apparatus membrane. Its subcellular location is the golgi apparatus. The protein resides in the trans-Golgi network membrane. It localises to the endosome membrane. The protein localises to the recycling endosome membrane. It is found in the cytoplasmic vesicle. Its subcellular location is the phagosome membrane. The protein resides in the cytoplasm. It localises to the cytoskeleton. The protein localises to the cilium basal body. It is found in the endoplasmic reticulum membrane. Its subcellular location is the perinuclear region. The protein resides in the lysosome. The enzyme catalyses GTP + H2O = GDP + phosphate + H(+). With respect to regulation, regulated by guanine nucleotide exchange factors (GEFs) DENND4C and RABIF which promote the exchange of bound GDP for free GTP. Regulated by GTPase activating proteins (GAPs) including TBC1D21 which increase the GTP hydrolysis activity. Inhibited by GDP dissociation inhibitors GDI1 and GDI2 which prevent Rab-GDP dissociation. In terms of biological role, the small GTPases Rab are key regulators of intracellular membrane trafficking, from the formation of transport vesicles to their fusion with membranes. Rabs cycle between an inactive GDP-bound form and an active GTP-bound form that is able to recruit to membranes different set of downstream effectors directly responsible for vesicle formation, movement, tethering and fusion. That Rab is mainly involved in the biosynthetic transport of proteins from the Golgi to the plasma membrane. Regulates, for instance, SLC2A4/GLUT4 glucose transporter-enriched vesicles delivery to the plasma membrane. In parallel, it regulates the transport of TLR4, a toll-like receptor to the plasma membrane and therefore may be important for innate immune response. Also plays a specific role in asymmetric protein transport to the plasma membrane. In neurons, it is involved in axonogenesis through regulation of vesicular membrane trafficking toward the axonal plasma membrane. In epithelial cells, it regulates transport from the Golgi to the basolateral membrane. May play a role in the basolateral recycling pathway and in phagosome maturation. May play a role in endoplasmic reticulum dynamics and morphology controlling tubulation along microtubules and tubules fusion. Together with LRRK2, RAB8A, and RILPL1, it regulates ciliogenesis. When phosphorylated by LRRK2 on Thr-73, binds RILPL1 and inhibits ciliogenesis. Participates in the export of a subset of neosynthesized proteins through a Rab8-Rab10-Rab11-dependent endososomal export route. Targeted to and stabilized on stressed lysosomes through LRRK2 phosphorylation where it promotes the extracellular release of lysosomal content through EHBP1 and EHNP1L1 effector proteins. Its function is as follows. (Microbial infection) Upon Legionella pneumophila infection promotes endoplasmic reticulum recruitment and bacterial replication. Plays a role in remodeling the Legionella-containing vacuole (LCV) into an endoplasmic reticulum-like vacuole. In Homo sapiens (Human), this protein is Ras-related protein Rab-10.